Reading from the N-terminus, the 574-residue chain is Arginine--tRNA ligase (574 aa).

The 'HIGH' region signature appears at Pro126 to His136.

This sequence belongs to the class-I aminoacyl-tRNA synthetase family. Monomer.

The protein localises to the cytoplasm. It carries out the reaction tRNA(Arg) + L-arginine + ATP = L-arginyl-tRNA(Arg) + AMP + diphosphate. The chain is Arginine--tRNA ligase from Chloroflexus aurantiacus (strain ATCC 29366 / DSM 635 / J-10-fl).